Consider the following 274-residue polypeptide: Undecaprenyl-diphosphatase (274 aa).

A run of 8 helical transmembrane segments spans residues 1–21 (MDWLYSLIYGIVEGITEFLPI), 42–62 (VKDTFEVVIQGGAILAVLVYY), 81–101 (LWLGVVLACIPAVILGVLFGD), 107–127 (LFRPSVVAWALIVGGVLMWLL), 142–162 (ISAGKALAIGAAQCLALLWPG), 184–204 (TKFSFYLGVPTLGGAALLDFI), 213–233 (IGVVNVAIGAVTSFVVAYFAI), and 248–268 (FAVYRVVVGVLILVLIARGVL).

The protein belongs to the UppP family.

The protein resides in the cell membrane. It carries out the reaction di-trans,octa-cis-undecaprenyl diphosphate + H2O = di-trans,octa-cis-undecaprenyl phosphate + phosphate + H(+). In terms of biological role, catalyzes the dephosphorylation of undecaprenyl diphosphate (UPP). Confers resistance to bacitracin. This Deinococcus radiodurans (strain ATCC 13939 / DSM 20539 / JCM 16871 / CCUG 27074 / LMG 4051 / NBRC 15346 / NCIMB 9279 / VKM B-1422 / R1) protein is Undecaprenyl-diphosphatase.